Reading from the N-terminus, the 190-residue chain is Large ribosomal subunit protein eL19 (190 aa).

Disordered stretches follow at residues 56–85 and 166–190; these read TVHS…KGTK and NRAA…EAAN. Over residues 72-83 the composition is skewed to basic residues; the sequence is AGRHMGYGKRKG. A compositionally biased stretch (basic and acidic residues) spans 166 to 184; sequence NRAARERRQQRLAEKKEAL.

It belongs to the eukaryotic ribosomal protein eL19 family. In terms of assembly, component of the large ribosomal subunit. Mature ribosomes consist of a small (40S) and a large (60S) subunit. The 40S subunit contains about 32 different proteins and 1 molecule of RNA (18S). The 60S subunit contains 45 different proteins and 3 molecules of RNA (25S, 5.8S and 5S).

The protein resides in the cytoplasm. In terms of biological role, component of the ribosome, a large ribonucleoprotein complex responsible for the synthesis of proteins in the cell. The small ribosomal subunit (SSU) binds messenger RNAs (mRNAs) and translates the encoded message by selecting cognate aminoacyl-transfer RNA (tRNA) molecules. The large subunit (LSU) contains the ribosomal catalytic site termed the peptidyl transferase center (PTC), which catalyzes the formation of peptide bonds, thereby polymerizing the amino acids delivered by tRNAs into a polypeptide chain. The nascent polypeptides leave the ribosome through a tunnel in the LSU and interact with protein factors that function in enzymatic processing, targeting, and the membrane insertion of nascent chains at the exit of the ribosomal tunnel. RPL19A may play a role in the last stages of translation initiation, in particular subunit joining and shedding/releasing factors. This is Large ribosomal subunit protein eL19 from Candida albicans (strain SC5314 / ATCC MYA-2876) (Yeast).